The sequence spans 487 residues: Protein nucleotidyltransferase YdiU (487 aa).

Residues G90, G92, R93, K113, D125, G126, R176, and R183 each coordinate ATP. Residue D252 is the Proton acceptor of the active site. Positions 253 and 262 each coordinate Mg(2+). D262 lines the ATP pocket.

The protein belongs to the SELO family. It depends on Mg(2+) as a cofactor. The cofactor is Mn(2+).

It catalyses the reaction L-seryl-[protein] + ATP = 3-O-(5'-adenylyl)-L-seryl-[protein] + diphosphate. The catalysed reaction is L-threonyl-[protein] + ATP = 3-O-(5'-adenylyl)-L-threonyl-[protein] + diphosphate. The enzyme catalyses L-tyrosyl-[protein] + ATP = O-(5'-adenylyl)-L-tyrosyl-[protein] + diphosphate. It carries out the reaction L-histidyl-[protein] + UTP = N(tele)-(5'-uridylyl)-L-histidyl-[protein] + diphosphate. It catalyses the reaction L-seryl-[protein] + UTP = O-(5'-uridylyl)-L-seryl-[protein] + diphosphate. The catalysed reaction is L-tyrosyl-[protein] + UTP = O-(5'-uridylyl)-L-tyrosyl-[protein] + diphosphate. Functionally, nucleotidyltransferase involved in the post-translational modification of proteins. It can catalyze the addition of adenosine monophosphate (AMP) or uridine monophosphate (UMP) to a protein, resulting in modifications known as AMPylation and UMPylation. In Ectopseudomonas mendocina (strain ymp) (Pseudomonas mendocina), this protein is Protein nucleotidyltransferase YdiU.